Reading from the N-terminus, the 132-residue chain is Hydrogenase maturation factor HypA (132 aa).

Residue His-2 participates in Ni(2+) binding. Zn(2+)-binding residues include Cys-74, Cys-77, Cys-91, and Cys-94.

This sequence belongs to the HypA/HybF family.

In terms of biological role, involved in the maturation of [NiFe] hydrogenases. Required for nickel insertion into the metal center of the hydrogenase. This is Hydrogenase maturation factor HypA from Synechococcus sp. (strain JA-2-3B'a(2-13)) (Cyanobacteria bacterium Yellowstone B-Prime).